The following is a 406-amino-acid chain: GTPase Obg (406 aa).

One can recognise an Obg domain in the interval 1-159 (MRFVDEAVIT…REIRLELKVL (159 aa)). Residues 120-143 (GGEGGLGNTHFKSSTNRAPRKCTT) are disordered. One can recognise an OBG-type G domain in the interval 160–333 (ADVGLLGMPN…VVYYLMDQIE (174 aa)). Residues 166–173 (GMPNAGKS), 191–195 (FTTMV), 213–216 (DIPG), 283–286 (NKLD), and 314–316 (SGL) contribute to the GTP site. Residues S173 and T193 each contribute to the Mg(2+) site. The tract at residues 381–406 (ESMMDDDDDFDDDEDDGDVESIYVRD) is disordered. A compositionally biased stretch (acidic residues) spans 383-399 (MMDDDDDFDDDEDDGDV).

This sequence belongs to the TRAFAC class OBG-HflX-like GTPase superfamily. OBG GTPase family. In terms of assembly, monomer. The cofactor is Mg(2+).

Its subcellular location is the cytoplasm. Its function is as follows. An essential GTPase which binds GTP, GDP and possibly (p)ppGpp with moderate affinity, with high nucleotide exchange rates and a fairly low GTP hydrolysis rate. Plays a role in control of the cell cycle, stress response, ribosome biogenesis and in those bacteria that undergo differentiation, in morphogenesis control. The sequence is that of GTPase Obg from Acinetobacter baumannii (strain ACICU).